The primary structure comprises 227 residues: Cytochrome c oxidase subunit 2 (227 aa).

At 1–14 (MAYPFQLGFQDATS) the chain is on the mitochondrial intermembrane side. The chain crosses the membrane as a helical span at residues 15–45 (PIMEELLHFHDHTLMIVFLISSLVLYVISAM). Residues 46 to 59 (LTTNLTHTSTMDAQ) are Mitochondrial matrix-facing. A helical transmembrane segment spans residues 60–87 (EVETIWTILPAIILITIALPSLRILYMM). Residues 88-227 (DEINNPAMTI…YFEKWSVSML (140 aa)) lie on the Mitochondrial intermembrane side of the membrane. Cu cation-binding residues include His-161, Cys-196, Glu-198, Cys-200, His-204, and Met-207. Glu-198 lines the Mg(2+) pocket. Tyr-218 carries the phosphotyrosine modification.

It belongs to the cytochrome c oxidase subunit 2 family. Component of the cytochrome c oxidase (complex IV, CIV), a multisubunit enzyme composed of 14 subunits. The complex is composed of a catalytic core of 3 subunits MT-CO1, MT-CO2 and MT-CO3, encoded in the mitochondrial DNA, and 11 supernumerary subunits COX4I, COX5A, COX5B, COX6A, COX6B, COX6C, COX7A, COX7B, COX7C, COX8 and NDUFA4, which are encoded in the nuclear genome. The complex exists as a monomer or a dimer and forms supercomplexes (SCs) in the inner mitochondrial membrane with NADH-ubiquinone oxidoreductase (complex I, CI) and ubiquinol-cytochrome c oxidoreductase (cytochrome b-c1 complex, complex III, CIII), resulting in different assemblies (supercomplex SCI(1)III(2)IV(1) and megacomplex MCI(2)III(2)IV(2)). Found in a complex with TMEM177, COA6, COX18, COX20, SCO1 and SCO2. Interacts with TMEM177 in a COX20-dependent manner. Interacts with COX20. Interacts with COX16. Cu cation serves as cofactor.

It is found in the mitochondrion inner membrane. It catalyses the reaction 4 Fe(II)-[cytochrome c] + O2 + 8 H(+)(in) = 4 Fe(III)-[cytochrome c] + 2 H2O + 4 H(+)(out). Functionally, component of the cytochrome c oxidase, the last enzyme in the mitochondrial electron transport chain which drives oxidative phosphorylation. The respiratory chain contains 3 multisubunit complexes succinate dehydrogenase (complex II, CII), ubiquinol-cytochrome c oxidoreductase (cytochrome b-c1 complex, complex III, CIII) and cytochrome c oxidase (complex IV, CIV), that cooperate to transfer electrons derived from NADH and succinate to molecular oxygen, creating an electrochemical gradient over the inner membrane that drives transmembrane transport and the ATP synthase. Cytochrome c oxidase is the component of the respiratory chain that catalyzes the reduction of oxygen to water. Electrons originating from reduced cytochrome c in the intermembrane space (IMS) are transferred via the dinuclear copper A center (CU(A)) of subunit 2 and heme A of subunit 1 to the active site in subunit 1, a binuclear center (BNC) formed by heme A3 and copper B (CU(B)). The BNC reduces molecular oxygen to 2 water molecules using 4 electrons from cytochrome c in the IMS and 4 protons from the mitochondrial matrix. The sequence is that of Cytochrome c oxidase subunit 2 (MT-CO2) from Macrotus californicus (Californian leaf-nosed bat).